The primary structure comprises 1097 residues: DNA-directed RNA polymerase subunit beta (1097 aa).

The disordered stretch occupies residues 1070–1097; that stretch reads LMQDVNPRRNTPSRPTYESLGTSEYEED. Positions 1077 to 1091 are enriched in polar residues; sequence RRNTPSRPTYESLGT.

Belongs to the RNA polymerase beta chain family. As to quaternary structure, in cyanobacteria the RNAP catalytic core is composed of 2 alpha, 1 beta, 1 beta', 1 gamma and 1 omega subunit. When a sigma factor is associated with the core the holoenzyme is formed, which can initiate transcription.

The enzyme catalyses RNA(n) + a ribonucleoside 5'-triphosphate = RNA(n+1) + diphosphate. DNA-dependent RNA polymerase catalyzes the transcription of DNA into RNA using the four ribonucleoside triphosphates as substrates. This chain is DNA-directed RNA polymerase subunit beta, found in Prochlorococcus marinus (strain MIT 9515).